We begin with the raw amino-acid sequence, 260 residues long: UPF0246 protein Bcen2424_2223 (260 aa).

It belongs to the UPF0246 family.

The polypeptide is UPF0246 protein Bcen2424_2223 (Burkholderia cenocepacia (strain HI2424)).